Reading from the N-terminus, the 58-residue chain is Small ribosomal subunit protein bS21 (58 aa).

This sequence belongs to the bacterial ribosomal protein bS21 family.

The polypeptide is Small ribosomal subunit protein bS21 (Prochlorococcus marinus (strain MIT 9301)).